The chain runs to 672 residues: DNA ligase (672 aa).

Residues 30–34, 79–80, and Glu110 each bind NAD(+); these read DAVYD and SL. The active-site N6-AMP-lysine intermediate is Lys112. 4 residues coordinate NAD(+): Arg133, Glu170, Lys287, and Lys311. Zn(2+) is bound by residues Cys405, Cys408, Cys423, and Cys429. The BRCT domain maps to 590 to 672; that stretch reads ADELPLSGKT…IALLTEHGAI (83 aa).

The protein belongs to the NAD-dependent DNA ligase family. LigA subfamily. It depends on Mg(2+) as a cofactor. Mn(2+) is required as a cofactor.

It carries out the reaction NAD(+) + (deoxyribonucleotide)n-3'-hydroxyl + 5'-phospho-(deoxyribonucleotide)m = (deoxyribonucleotide)n+m + AMP + beta-nicotinamide D-nucleotide.. In terms of biological role, DNA ligase that catalyzes the formation of phosphodiester linkages between 5'-phosphoryl and 3'-hydroxyl groups in double-stranded DNA using NAD as a coenzyme and as the energy source for the reaction. It is essential for DNA replication and repair of damaged DNA. The polypeptide is DNA ligase (Marinomonas sp. (strain MWYL1)).